The following is a 41-amino-acid chain: Photosystem I reaction center subunit IX (41 aa).

Residues 7-27 (YLSTAPVLATLWFGLLAGILI) form a helical membrane-spanning segment.

It belongs to the PsaJ family.

The protein localises to the plastid. The protein resides in the chloroplast thylakoid membrane. In terms of biological role, may help in the organization of the PsaE and PsaF subunits. The chain is Photosystem I reaction center subunit IX from Chara vulgaris (Common stonewort).